We begin with the raw amino-acid sequence, 140 residues long: Ribosomal RNA large subunit methyltransferase H (140 aa).

S-adenosyl-L-methionine-binding residues include L55 and G87.

Belongs to the RNA methyltransferase RlmH family. As to quaternary structure, homodimer.

Its subcellular location is the cytoplasm. The enzyme catalyses pseudouridine(1915) in 23S rRNA + S-adenosyl-L-methionine = N(3)-methylpseudouridine(1915) in 23S rRNA + S-adenosyl-L-homocysteine + H(+). Functionally, specifically methylates the pseudouridine at position 1915 (m3Psi1915) in 23S rRNA. This is Ribosomal RNA large subunit methyltransferase H from Erythrobacter litoralis (strain HTCC2594).